We begin with the raw amino-acid sequence, 85 residues long: Large ribosomal subunit protein bL27 (85 aa).

The interval 1–20 (MATKKAGGSTKNGRDSNPKM) is disordered.

The protein belongs to the bacterial ribosomal protein bL27 family.

The polypeptide is Large ribosomal subunit protein bL27 (Acinetobacter baumannii (strain AB307-0294)).